We begin with the raw amino-acid sequence, 132 residues long: MYTDPIADYLTRVRNAVAANHKVVEIPASNLKKEITKILFDQGYILSYKFEQNTVQGSIKIALKYDKDTKEPVIKDIQRISKPGLRKYAGAAKLPRILNGLGIAIVSTSKGLMTGKQAKQLNVGGEVICYVY.

The protein belongs to the universal ribosomal protein uS8 family. In terms of assembly, part of the 30S ribosomal subunit. Contacts proteins S5 and S12.

Its function is as follows. One of the primary rRNA binding proteins, it binds directly to 16S rRNA central domain where it helps coordinate assembly of the platform of the 30S subunit. The sequence is that of Small ribosomal subunit protein uS8 from Flavobacterium johnsoniae (strain ATCC 17061 / DSM 2064 / JCM 8514 / BCRC 14874 / CCUG 350202 / NBRC 14942 / NCIMB 11054 / UW101) (Cytophaga johnsonae).